The sequence spans 314 residues: Protein YIF1B (314 aa).

Methionine 1 bears the N-acetylmethionine mark. Residues 1 to 12 are compositionally biased toward low complexity; that stretch reads MHPAGLAAAAAG. A disordered region spans residues 1–55; sequence MHPAGLAAAAAGTPRLRKWPSKRRIPVSQPGMADPHQLFDDTSSAQSRGYGAQRA. Over 1 to 156 the chain is Cytoplasmic; that stretch reads MHPAGLAAAA…APRFDVNAPD (156 aa). Residue threonine 13 is modified to Phosphothreonine. Positions 15–25 are enriched in basic residues; the sequence is RLRKWPSKRRI. Phosphoserine is present on serine 65. A helical membrane pass occupies residues 157–177; it reads LYIPAMAFITYVLVAGLALGT. The Extracellular portion of the chain corresponds to 178–192; it reads QDRFSPDLLGLQASS. A helical membrane pass occupies residues 193-213; it reads ALAWLTLEVLAILLSLYLVTV. Residues 214 to 219 are Cytoplasmic-facing; sequence NTDLTT. The helical transmembrane segment at 220–240 threads the bilayer; the sequence is IDLVAFLGYKYVGMIGGVLMG. A topological domain (extracellular) is located at residue leucine 241. The helical transmembrane segment at 242–262 threads the bilayer; it reads LFGKIGYYLVLGWCCVAIFVF. Topologically, residues 263 to 292 are cytoplasmic; it reads MIRTLRLKILADAAAEGVPVRGARNQLRMY. The chain crosses the membrane as a helical span at residues 293–313; the sequence is LTMAVAAAQPMLMYWLTFHLV. A topological domain (extracellular) is located at residue arginine 314.

This sequence belongs to the YIF1 family. Interacts with HTR1A (via C-terminus). Interacts with ABCB9 (via TMD0); this interaction allows (but is not essential) the ER-to-Golgi trafficking and strongly depends on a salt bridge within TMD0.

It is found in the endoplasmic reticulum membrane. The protein localises to the golgi apparatus membrane. The protein resides in the endoplasmic reticulum-Golgi intermediate compartment membrane. Functionally, functions in endoplasmic reticulum to Golgi vesicle-mediated transport and regulates the proper organization of the endoplasmic reticulum and the Golgi. Plays a key role in targeting to neuronal dendrites receptors such as HTR1A. Plays also a role in primary cilium and sperm flagellum assembly probably through protein transport to these compartments. This chain is Protein YIF1B, found in Homo sapiens (Human).